We begin with the raw amino-acid sequence, 77 residues long: Acyl carrier protein (77 aa).

A Carrier domain is found at 3-77 (QEIFEKVKKI…GKAVEHIESK (75 aa)). Serine 38 is modified (O-(pantetheine 4'-phosphoryl)serine).

The protein belongs to the acyl carrier protein (ACP) family. Post-translationally, 4'-phosphopantetheine is transferred from CoA to a specific serine of apo-ACP by AcpS. This modification is essential for activity because fatty acids are bound in thioester linkage to the sulfhydryl of the prosthetic group.

Its subcellular location is the cytoplasm. Its pathway is lipid metabolism; fatty acid biosynthesis. Functionally, carrier of the growing fatty acid chain in fatty acid biosynthesis. The polypeptide is Acyl carrier protein (Synechocystis sp. (strain ATCC 27184 / PCC 6803 / Kazusa)).